A 169-amino-acid chain; its full sequence is Disulfide bond formation protein B 1 (169 aa).

Over 1 to 13 (MSALLKPLDNRLF) the chain is Cytoplasmic. Residues 14–30 (WPAVAIGGLLILAFVLY) form a helical membrane-spanning segment. The Periplasmic segment spans residues 31-48 (LQHVRGFAPCSLCIFIRL). C40 and C43 are disulfide-bonded. Residues 49 to 64 (DVLGLVLAGIVGSLAP) traverse the membrane as a helical segment. Over 65–71 (RSRIAGG) the chain is Cytoplasmic. A helical transmembrane segment spans residues 72-89 (IAALGMLAASLGGIYHAW). The Periplasmic portion of the chain corresponds to 90 to 145 (SLVAEEKLAAQGMGSCKMFMGFPEWIPLDTWLPQVFQPEGLCGEVVWTLLGQSMAV). Cysteines 105 and 131 form a disulfide. The helical transmembrane segment at 146 to 164 (WSLALFVFCLLVLAAKLAF) threads the bilayer. Over 165-169 (GRRTA) the chain is Cytoplasmic.

The protein belongs to the DsbB family.

It is found in the cell inner membrane. In terms of biological role, required for disulfide bond formation in some periplasmic proteins. Acts by oxidizing the DsbA protein. The protein is Disulfide bond formation protein B 1 of Pseudomonas aeruginosa (strain UCBPP-PA14).